The following is a 710-amino-acid chain: Amyloid beta precursor protein binding family B member 1 (710 aa).

Over residues 1-15 (MSVPSSLSQSAINAN) the composition is skewed to polar residues. Disordered regions lie at residues 1-24 (MSVP…ALSL), 131-254 (GLRG…TDSD), 276-299 (GTTQ…EESQ), and 340-365 (TFPA…NTNP). The span at 145 to 173 (GPDEGEEKAAGEAEEEEEDDDDEEEEEDL) shows a compositional bias: acidic residues. N6-acetyllysine is present on K204. A compositionally biased stretch (polar residues) spans 223-234 (SWATLSQGSPSY). One can recognise a WW domain in the interval 253-285 (SDLPAGWMRVQDTSGTYYWHIPTGTTQWEPPGR). The segment covering 287-299 (SPSQGSSPQEESQ) has biased composition (low complexity). One can recognise a PID 1 domain in the interval 370 to 509 (FAVRSLGWVE…SKIMAERRNA (140 aa)). S459 carries the phosphoserine; by PKC modification. The residue at position 517 (S517) is a Phosphoserine. The 158-residue stretch at 542–699 (KFQVYYLGNV…RRGVQSLWGS (158 aa)) folds into the PID 2 domain. Residue Y547 is modified to Phosphotyrosine; by ABL1. At S610 the chain carries Phosphoserine; by SGK1. At K701 the chain carries N6-acetyllysine.

In terms of assembly, component of a complex, at least composed of APBB1, RASD1/DEXRAS1 and APP. Interacts (via PID domain 2) with APP (with the intracellular domain of the amyloid-beta precursor protein). Interacts (via PID domain 2) with RASD1/DEXRAS1; impairs the transcription activation activity. Interacts (via PID domain 1) with KAT5/TIP60. Interacts (via the WW domain) with the proline-rich region of APBB1IP. Interacts with TSHZ1 and TSHZ2. Interacts (via the WW domain) with histone H2AX (when phosphorylated on 'Tyr-142') and the proline-rich region of ENAH. Interacts with MAPK8. Interacts (via PID domain 1) with TSHZ3 (via homeobox domain). Interacts with SET. Found in a trimeric complex with HDAC1 and TSHZ3; the interaction between HDAC1 and APBB1 is mediated by TSHZ3. Interacts (via WWW domain) with NEK6. Interacts (via WWW domain) with ABL1. Interacts with RNF157. Interacts with ARF6. Phosphorylation at Ser-610 by SGK1 promotes its localization to the nucleus. Phosphorylated following nuclear translocation. Phosphorylation at Tyr-547 by ABL1 enhances transcriptional activation activity and reduces the affinity for RASD1/DEXRAS1. Phosphorylated at Ser-459 by PKC upon insulin activation. Post-translationally, acetylation at Lys-204 and Lys-701 by KAT5 promotes its transcription activator activity. In terms of processing, polyubiquitination by RNF157 leads to degradation by the proteasome. As to expression, highly expressed in brain; strongly reduced in post-mortem elderly subjects with Alzheimer disease. In terms of tissue distribution, expressed preferentially in the brain.

The protein resides in the cell membrane. It is found in the cytoplasm. Its subcellular location is the nucleus. The protein localises to the cell projection. It localises to the growth cone. The protein resides in the nucleus speckle. Functionally, transcription coregulator that can have both coactivator and corepressor functions. Adapter protein that forms a transcriptionally active complex with the gamma-secretase-derived amyloid precursor protein (APP) intracellular domain. Plays a central role in the response to DNA damage by translocating to the nucleus and inducing apoptosis. May act by specifically recognizing and binding histone H2AX phosphorylated on 'Tyr-142' (H2AXY142ph) at double-strand breaks (DSBs), recruiting other pro-apoptosis factors such as MAPK8/JNK1. Required for histone H4 acetylation at double-strand breaks (DSBs). Its ability to specifically bind modified histones and chromatin modifying enzymes such as KAT5/TIP60, probably explains its transcription activation activity. Functions in association with TSHZ3, SET and HDAC factors as a transcriptional repressor, that inhibits the expression of CASP4. Associates with chromatin in a region surrounding the CASP4 transcriptional start site(s). Involved in hippocampal neurite branching and neuromuscular junction formation, as a result plays a role in spatial memory functioning. Plays a role in the maintenance of lens transparency. May play a role in muscle cell strength. Acts as a molecular adapter that functions in neurite outgrowth by activating the RAC1-ARF6 axis upon insulin treatment. In Homo sapiens (Human), this protein is Amyloid beta precursor protein binding family B member 1.